Here is a 218-residue protein sequence, read N- to C-terminus: Thiamine-phosphate synthase (218 aa).

4-amino-2-methyl-5-(diphosphooxymethyl)pyrimidine is bound by residues 43 to 47 (QLRMK) and Asn75. Positions 76 and 95 each coordinate Mg(2+). Thr114 is a binding site for 4-amino-2-methyl-5-(diphosphooxymethyl)pyrimidine. 140-142 (TST) is a 2-[(2R,5Z)-2-carboxy-4-methylthiazol-5(2H)-ylidene]ethyl phosphate binding site. Residue Lys143 coordinates 4-amino-2-methyl-5-(diphosphooxymethyl)pyrimidine. Residues Gly171 and 191–192 (VS) each bind 2-[(2R,5Z)-2-carboxy-4-methylthiazol-5(2H)-ylidene]ethyl phosphate.

This sequence belongs to the thiamine-phosphate synthase family. The cofactor is Mg(2+).

It carries out the reaction 2-[(2R,5Z)-2-carboxy-4-methylthiazol-5(2H)-ylidene]ethyl phosphate + 4-amino-2-methyl-5-(diphosphooxymethyl)pyrimidine + 2 H(+) = thiamine phosphate + CO2 + diphosphate. The catalysed reaction is 2-(2-carboxy-4-methylthiazol-5-yl)ethyl phosphate + 4-amino-2-methyl-5-(diphosphooxymethyl)pyrimidine + 2 H(+) = thiamine phosphate + CO2 + diphosphate. It catalyses the reaction 4-methyl-5-(2-phosphooxyethyl)-thiazole + 4-amino-2-methyl-5-(diphosphooxymethyl)pyrimidine + H(+) = thiamine phosphate + diphosphate. Its pathway is cofactor biosynthesis; thiamine diphosphate biosynthesis; thiamine phosphate from 4-amino-2-methyl-5-diphosphomethylpyrimidine and 4-methyl-5-(2-phosphoethyl)-thiazole: step 1/1. In terms of biological role, condenses 4-methyl-5-(beta-hydroxyethyl)thiazole monophosphate (THZ-P) and 2-methyl-4-amino-5-hydroxymethyl pyrimidine pyrophosphate (HMP-PP) to form thiamine monophosphate (TMP). The polypeptide is Thiamine-phosphate synthase (Myxococcus xanthus (strain DK1622)).